Here is a 97-residue protein sequence, read N- to C-terminus: Aspartyl/glutamyl-tRNA(Asn/Gln) amidotransferase subunit C (97 aa).

Belongs to the GatC family. In terms of assembly, heterotrimer of A, B and C subunits.

The enzyme catalyses L-glutamyl-tRNA(Gln) + L-glutamine + ATP + H2O = L-glutaminyl-tRNA(Gln) + L-glutamate + ADP + phosphate + H(+). The catalysed reaction is L-aspartyl-tRNA(Asn) + L-glutamine + ATP + H2O = L-asparaginyl-tRNA(Asn) + L-glutamate + ADP + phosphate + 2 H(+). Functionally, allows the formation of correctly charged Asn-tRNA(Asn) or Gln-tRNA(Gln) through the transamidation of misacylated Asp-tRNA(Asn) or Glu-tRNA(Gln) in organisms which lack either or both of asparaginyl-tRNA or glutaminyl-tRNA synthetases. The reaction takes place in the presence of glutamine and ATP through an activated phospho-Asp-tRNA(Asn) or phospho-Glu-tRNA(Gln). In Synechococcus sp. (strain CC9311), this protein is Aspartyl/glutamyl-tRNA(Asn/Gln) amidotransferase subunit C.